The following is a 433-amino-acid chain: MRSHGQQISDRLTVEVDCHSLGPSECPSMTSSFSPLDSPTPTPTSLYSQGSMASPGWPEPSHYHHGLPMERRTSATPLRSAFRMADLTSGEGMMNMPCGNMDRQEQMPLPDYLPGYDENVDQLWIPQDMPKTYQEPQFPYQASMPQYNQMARNYYHRPQQAGYLPESASNPCLSRPIFTQSTERMPNSASMSNMLGWMPSHESLVPQTITPAQVQPFPSGPVTPPSSSYSDFPANIPTFKTHTPSTPHRSVSMGTPSGSDTPVSRMSGHNDYQEDFQLSPVYREGMMQRHRQPSRKSSKKQLLRSNLSLENLPSIIKQVQFKCKEPGCKGRFKRQEHLKRHMKSHSKEKPHVCWIPGCHRAFSRSDNLNAHYTKTHSKRGGRNRYVATLDETSQDFDPDFRGQLTPDGRPIYGSKLEDTMPDCGELSVDGWDD.

Disordered regions lie at residues P23–H64 and K240–R265. Residues T30–S48 are compositionally biased toward low complexity. Residues K240–S264 are compositionally biased toward polar residues. 2 C2H2-type zinc fingers span residues F321–H345 and H351–H376. The segment at E391 to L416 is disordered.

Its subcellular location is the nucleus. In terms of biological role, brlA, abaA and wetA are pivotal regulators of conidiophore development and conidium maturation. They act individually and together to regulate their own expression and that of numerous other sporulation-specific genes. Binds promoters of target genes at brlA response elements (BREs) containing the conserved sequence 5'-(C/A)(A/G)AGGG(G/A)-3'. Is not required for penicillin V production. The protein is C2H2 type master regulator of conidiophore development brlA of Penicillium rubens (strain ATCC 28089 / DSM 1075 / NRRL 1951 / Wisconsin 54-1255) (Penicillium chrysogenum).